A 320-amino-acid polypeptide reads, in one-letter code: ATP-dependent 6-phosphofructokinase (320 aa).

G12 lines the ATP pocket. 22–26 (RGVVR) contributes to the ADP binding site. ATP contacts are provided by residues 73–74 (RF) and 103–106 (GDGS). Residue D104 coordinates Mg(2+). 126 to 128 (TID) is a binding site for substrate. Residue D128 is the Proton acceptor of the active site. ADP is bound at residue R155. Residues R163 and 170 to 172 (MGR) each bind substrate. Residues 186-188 (GCE), K212, and 214-216 (KKH) contribute to the ADP site. Substrate contacts are provided by residues E223, R244, and 250–253 (HIQR).

The protein belongs to the phosphofructokinase type A (PFKA) family. ATP-dependent PFK group I subfamily. Prokaryotic clade 'B1' sub-subfamily. Homotetramer. It depends on Mg(2+) as a cofactor.

Its subcellular location is the cytoplasm. The enzyme catalyses beta-D-fructose 6-phosphate + ATP = beta-D-fructose 1,6-bisphosphate + ADP + H(+). It functions in the pathway carbohydrate degradation; glycolysis; D-glyceraldehyde 3-phosphate and glycerone phosphate from D-glucose: step 3/4. With respect to regulation, allosterically activated by ADP and other diphosphonucleosides, and allosterically inhibited by phosphoenolpyruvate. Functionally, catalyzes the phosphorylation of D-fructose 6-phosphate to fructose 1,6-bisphosphate by ATP, the first committing step of glycolysis. This is ATP-dependent 6-phosphofructokinase from Vibrio vulnificus (strain CMCP6).